A 688-amino-acid chain; its full sequence is Bifunctional protein GAL10 (688 aa).

The tract at residues 1 to 346 is galactowaldenase; sequence MSEDKYCLVT…TQDNPFGYQI (346 aa). 6 to 37 serves as a coordination point for NAD(+); sequence YCLVTGGAGYIGSHTVVELCEAGYKCIVVDNL. A mutarotase region spans residues 347–688; sequence KGVDSKFFGD…HKLSYTFRTL (342 aa). H525 functions as the For mutarotase activity in the catalytic mechanism.

It in the N-terminal section; belongs to the NAD(P)-dependent epimerase/dehydratase family. This sequence in the C-terminal section; belongs to the aldose epimerase family. Requires NAD(+) as cofactor.

The enzyme catalyses UDP-alpha-D-glucose = UDP-alpha-D-galactose. The catalysed reaction is alpha-D-glucose = beta-D-glucose. It participates in carbohydrate metabolism; galactose metabolism. Its pathway is carbohydrate metabolism; hexose metabolism. Mutarotase converts alpha-aldose to the beta-anomer. It is active on D-glucose, L-arabinose, D-xylose, D-galactose, maltose and lactose. The polypeptide is Bifunctional protein GAL10 (GAL10) (Kluyveromyces lactis (strain ATCC 8585 / CBS 2359 / DSM 70799 / NBRC 1267 / NRRL Y-1140 / WM37) (Yeast)).